The primary structure comprises 299 residues: GTPase Era (299 aa).

The 168-residue stretch at 5–172 (KSGFVSIIGR…IDVLKTYLPE (168 aa)) folds into the Era-type G domain. Residues 13-20 (GRPNVGKS) form a G1 region. 13–20 (GRPNVGKS) contacts GTP. Residues 39–43 (QTTRN) are G2. Positions 60–63 (DTPG) are G3. GTP is bound by residues 60-64 (DTPGI) and 122-125 (NKID). Positions 122–125 (NKID) are G4. Positions 151 to 153 (ISA) are G5. The KH type-2 domain maps to 203 to 280 (TSEEIPHAIG…YLELWVKVQK (78 aa)).

It belongs to the TRAFAC class TrmE-Era-EngA-EngB-Septin-like GTPase superfamily. Era GTPase family. As to quaternary structure, monomer.

It localises to the cytoplasm. It is found in the cell membrane. An essential GTPase that binds both GDP and GTP, with rapid nucleotide exchange. Plays a role in 16S rRNA processing and 30S ribosomal subunit biogenesis and possibly also in cell cycle regulation and energy metabolism. The polypeptide is GTPase Era (Staphylococcus haemolyticus (strain JCSC1435)).